The primary structure comprises 160 residues: Crossover junction endodeoxyribonuclease RuvC (160 aa).

Catalysis depends on residues Asp9, Glu68, and Asp141. Asp9, Glu68, and Asp141 together coordinate Mg(2+).

Belongs to the RuvC family. Homodimer which binds Holliday junction (HJ) DNA. The HJ becomes 2-fold symmetrical on binding to RuvC with unstacked arms; it has a different conformation from HJ DNA in complex with RuvA. In the full resolvosome a probable DNA-RuvA(4)-RuvB(12)-RuvC(2) complex forms which resolves the HJ. It depends on Mg(2+) as a cofactor.

The protein localises to the cytoplasm. It catalyses the reaction Endonucleolytic cleavage at a junction such as a reciprocal single-stranded crossover between two homologous DNA duplexes (Holliday junction).. Its function is as follows. The RuvA-RuvB-RuvC complex processes Holliday junction (HJ) DNA during genetic recombination and DNA repair. Endonuclease that resolves HJ intermediates. Cleaves cruciform DNA by making single-stranded nicks across the HJ at symmetrical positions within the homologous arms, yielding a 5'-phosphate and a 3'-hydroxyl group; requires a central core of homology in the junction. The consensus cleavage sequence is 5'-(A/T)TT(C/G)-3'. Cleavage occurs on the 3'-side of the TT dinucleotide at the point of strand exchange. HJ branch migration catalyzed by RuvA-RuvB allows RuvC to scan DNA until it finds its consensus sequence, where it cleaves and resolves the cruciform DNA. This Campylobacter jejuni subsp. jejuni serotype O:2 (strain ATCC 700819 / NCTC 11168) protein is Crossover junction endodeoxyribonuclease RuvC.